Consider the following 358-residue polypeptide: Electron transfer flavoprotein subunit alpha, mitochondrial (358 aa).

Position 298-326 (L298–D326) interacts with FAD.

This sequence belongs to the ETF alpha-subunit/FixB family. Heterodimer of an alpha and a beta subunit. It depends on FAD as a cofactor.

The protein resides in the mitochondrion matrix. Its function is as follows. The electron transfer flavoprotein serves as a specific electron acceptor for several dehydrogenases, including five acyl-CoA dehydrogenases, glutaryl-CoA and sarcosine dehydrogenase. It transfers the electrons to the main mitochondrial respiratory chain via ETF-ubiquinone oxidoreductase (ETF dehydrogenase). The protein is Electron transfer flavoprotein subunit alpha, mitochondrial (ETFA) of Oryza sativa subsp. indica (Rice).